The chain runs to 1203 residues: DNA-directed RNA polymerase I subunit RPA135 (1203 aa).

Residue Ser2 is modified to N-acetylserine. At Ser81 the chain carries Phosphoserine. Residues 1104–1131 (CRECGSILTTQQSVPRIGSISTVCCRRC) form a C4-type zinc finger. Phosphoserine is present on Ser1156.

This sequence belongs to the RNA polymerase beta chain family. Component of the RNA polymerase I (Pol I) complex consisting of 14 subunits: RPA135, RPA190, RPC40, RPA14, RPB5, RPO26, RPA43, RPB8, RPA12, RPB10, RPC19, RPC10, RPA49 and RPA34. The complex is composed of a horseshoe-shaped core containing ten subunits (RPA135, RPA190, RPB5, RPO26, RPB8, RPB10, RPC10, RPA12, RPC19 and RPC40) where RPA135 and RPA190 form the DNA-binding cleft. Outside of the core, RPA14 and RPA43 form the stalk that mediates interactions with transcription initiation factors and newly synthesized RNA.

The protein resides in the nucleus. It localises to the nucleolus. It catalyses the reaction RNA(n) + a ribonucleoside 5'-triphosphate = RNA(n+1) + diphosphate. Its function is as follows. DNA-dependent RNA polymerases catalyze the transcription of DNA into RNA using the four ribonucleoside triphosphates as substrates. Component of RNA polymerase I (Pol I) which synthesizes ribosomal RNA precursors. Besides, RNA polymerase I has intrinsic RNA cleavage activity. RPA190 and RPA135 both contribute to the polymerase catalytic activity and together form the Pol I active center. In addition, subunit RPA12 contributes a catalytic zinc ribbon that is required for RNA cleavage by Pol I. A single stranded DNA template strand of the promoter is positioned within the central active site cleft of Pol I. A bridging helix emanates from RPA190 and crosses the cleft near the catalytic site and is thought to promote translocation of Pol I by acting as a ratchet that moves the RNA-DNA hybrid through the active site by switching from straight to bent conformations at each step of nucleotide addition. The protein is DNA-directed RNA polymerase I subunit RPA135 (RPA135) of Saccharomyces cerevisiae (strain ATCC 204508 / S288c) (Baker's yeast).